Consider the following 108-residue polypeptide: uncharacterized protein (108 aa).

A glycan (N-linked (GlcNAc...) asparagine) is linked at N33.

Post-translationally, N-glycosylated.

This is an uncharacterized protein from Saccharomyces cerevisiae (strain ATCC 204508 / S288c) (Baker's yeast).